We begin with the raw amino-acid sequence, 818 residues long: MCSNGIFVSLLTLSLLLGKSCSETDTLHQGQFLKDGQELVSAFKIFKLKFFNFKNSENLYLGIWFNNLYLNTDSQDRPVWIANRNNPISDRSGSLTVDSLGRLKILRGASTMLELSSIETTRNTTLQLLDSGNLQLQEMDADGSMKRVLWQSFDYPTDTLLPGMKLGFDGKTRKRWELTSWLGDTLPASGSFVFGMDTNITNVLTILWRGNMYWSSGLWNKGRFSEEELNECGFLFSFVSTKSGQYFMYSGDQDDARTFFPTIMIDEQGILRREQMHRQRNRQNYRNRNCLAAGYVVRDEPYGFTSFRVTVSSSASNGFVLSGTFSSVDCSAICLQNSSCLAYASTEPDGTGCEIWNTYPTNKGSASHSPRTIYIRGNENKKVAAWHIVVATLFLMTPIIWFIIYLVLRKFNVKGRNCIRITHKTVLVSMVFLLTMIGFIRRRILSLRFGSTIDQEMLLRELGIDRSCIHKRNERKSNNELQIFSFESVVSATDDFSDENKLGEGGFGPVYKGKLLNGEEVAIKRLSLASGQGLVEFKNEAILIAKLQHTNLVQVLGCCIEKDEKMLIYEYMQNKSLDYFLFDPLRKNVLDWTLRFRIMEGIIQGLLYLHKYSRLKVIHRDIKASNILLDEDMNPKISDFGLARIFGAEETRANTKRVAGTFGYMSPEYFREGLFSAKSDVFSFGVLMLEIICGRKNNSFHHDLEGPLNLIVHVWNLFKENKIREVIDLSLRDSALDYPQVLRCVQVALLCVQENAEDRPSMLDVVSMIYGEGNNALSLPKEPAFYDGPRRSFPEMKVEPQEPENVSASITITVLEAR.

Positions 1–22 are cleaved as a signal peptide; it reads MCSNGIFVSLLTLSLLLGKSCS. Residues 23–387 lie on the Extracellular side of the membrane; the sequence is ETDTLHQGQF…NENKKVAAWH (365 aa). The Bulb-type lectin domain maps to 24–149; sequence TDTLHQGQFL…DADGSMKRVL (126 aa). 3 N-linked (GlcNAc...) asparagine glycosylation sites follow: N123, N199, and N337. In terms of domain architecture, PAN spans 290 to 379; that stretch reads CLAAGYVVRD…PRTIYIRGNE (90 aa). Intrachain disulfides connect C330–C353 and C334–C340. A helical membrane pass occupies residues 388–408; sequence IVVATLFLMTPIIWFIIYLVL. The Cytoplasmic portion of the chain corresponds to 409–818; sequence RKFNVKGRNC…SITITVLEAR (410 aa). A Protein kinase domain is found at 496–785; that stretch reads FSDENKLGEG…ALSLPKEPAF (290 aa). Residues 502–510 and K524 contribute to the ATP site; that span reads LGEGGFGPV. A Phosphoserine modification is found at S530. Positions 585–602 are caM-binding; the sequence is LRKNVLDWTLRFRIMEGI. D621 acts as the Proton acceptor in catalysis. A phosphoserine mark is found at S625 and S638. Position 655 is a phosphothreonine (T655). Phosphoserine occurs at positions 699 and 807. Position 813 is a phosphothreonine (T813).

This sequence belongs to the protein kinase superfamily. Ser/Thr protein kinase family.

It is found in the cell membrane. It carries out the reaction L-seryl-[protein] + ATP = O-phospho-L-seryl-[protein] + ADP + H(+). The catalysed reaction is L-threonyl-[protein] + ATP = O-phospho-L-threonyl-[protein] + ADP + H(+). The sequence is that of G-type lectin S-receptor-like serine/threonine-protein kinase At1g67520 from Arabidopsis thaliana (Mouse-ear cress).